The primary structure comprises 329 residues: Chlorophyllase-1, chloroplastic (329 aa).

The N-terminal 21 residues, 1-21 (MAAMVDSKPAASVQGTPLLAT), are a transit peptide targeting the chloroplast. Positions 145–149 (GHSRG) match the GXSXG motif. The active-site Nucleophile is the serine 147. Residues aspartate 169 and histidine 242 each act as charge relay system in the active site.

Belongs to the AB hydrolase superfamily. Lipase family.

It is found in the plastid. The protein localises to the chloroplast. It catalyses the reaction a chlorophyll + H2O = a chlorophyllide + phytol + H(+). The protein operates within porphyrin-containing compound metabolism; chlorophyll degradation. Its function is as follows. Catalyzes the hydrolysis of ester bond in chlorophyll to yield chlorophyllide and phytol. This Citrus unshiu (Satsuma mandarin) protein is Chlorophyllase-1, chloroplastic.